A 164-amino-acid polypeptide reads, in one-letter code: Lectin (164 aa).

A signal peptide spans 1–15 (TVATILTILASTCMA). Residues 16-125 (RNVLVNNEGL…DIWSTGTYRK (110 aa)) form the Bulb-type lectin domain. Residues Cys44 and Cys68 are joined by a disulfide bond.

Homotetramer. In terms of processing, not glycosylated.

Functionally, mannose-specific lectin. Induces a Th1-type immune response in vitro. Causes a 4-fold increase in the proliferation of murine thymocytes and a significant increase in the production of nitric oxide at 24 hours in a macrophage cell line. Stimulates the production of the pro-inflammatory cytokines TNF and IL12 by rat peritoneal macrophages in a dose-dependent manner and of the cytokines IFNG and IL2 in murine thymocytes. Has hemagglutination activity towards rabbit erythrocytes. The chain is Lectin from Allium cepa (Onion).